The sequence spans 238 residues: Endothelin-3 (238 aa).

A signal peptide spans 1–16 (MEPGLWLLFGLTVTSA). The propeptide occupies 17-94 (AGFVPCSQSG…AEGAPEHHRS (78 aa)). The interval 24 to 89 (QSGDAGRRGV…GQEQAAEGAP (66 aa)) is disordered. Intrachain disulfides connect Cys-97–Cys-111 and Cys-99–Cys-107. Residues 118–238 (INTPEQTVPY…PRCLFQEGAP (121 aa)) constitute a propeptide that is removed on maturation. The tract at residues 159 to 173 (CACVGRYDKACLHFC) is endothelin-like. Residues 183 to 219 (SRTAEKTDKEEEGKVEVKDQQSKQALDLHHPKLMPGS) are disordered. Residues 185–212 (TAEKTDKEEEGKVEVKDQQSKQALDLHH) are compositionally biased toward basic and acidic residues.

The protein belongs to the endothelin/sarafotoxin family. In terms of tissue distribution, expressed in trophoblasts and placental stem villi vessels, but not in cultured placental smooth muscle cells.

It is found in the secreted. Its function is as follows. Endothelins are endothelium-derived vasoconstrictor peptides. The sequence is that of Endothelin-3 (EDN3) from Homo sapiens (Human).